A 364-amino-acid polypeptide reads, in one-letter code: MSRTDDPGVAGLRVYIVGGAVRDDLLGLPAGDRDWVVVGATPEDMARRGFIPVGGDFPVFLHPRTKEEYALARTERKSGRGYKGFTFYTGADVTLEQDLQRRDLTVNAIARTPQGELVDPLDGVADVRARVLRHVGEAFAEDPVRILRLGRFAARFGDFSIAPETMQLCRRMVEAGEADALVPERVWKEVSRGLMAQAPSRMLDVLARAGALARVMPELHDDTAVRAEIDRAAAAGLPLAGRYALLCRHTPERDALGRRLRAPVECMDQARLLPLAVDALAASATPAAQLDLIERCDALRKPERFDALLQAAAIVAPVDLSAWRARVQAVRAIDAGAIARQCAGDPARIKPALRQARLQALGGA.

ATP contacts are provided by glycine 19 and arginine 22. Residues glycine 19 and arginine 22 each coordinate CTP. The Mg(2+) site is built by aspartate 32 and aspartate 34. Residues arginine 102, arginine 148, and arginine 151 each contribute to the ATP site. CTP-binding residues include arginine 102, arginine 148, and arginine 151.

It belongs to the tRNA nucleotidyltransferase/poly(A) polymerase family. Bacterial CCA-adding enzyme type 2 subfamily. It depends on Mg(2+) as a cofactor.

The catalysed reaction is a tRNA precursor + 2 CTP + ATP = a tRNA with a 3' CCA end + 3 diphosphate. It catalyses the reaction a tRNA with a 3' CCA end + 2 CTP + ATP = a tRNA with a 3' CCACCA end + 3 diphosphate. Its function is as follows. Catalyzes the addition and repair of the essential 3'-terminal CCA sequence in tRNAs without using a nucleic acid template. Adds these three nucleotides in the order of C, C, and A to the tRNA nucleotide-73, using CTP and ATP as substrates and producing inorganic pyrophosphate. tRNA 3'-terminal CCA addition is required both for tRNA processing and repair. Also involved in tRNA surveillance by mediating tandem CCA addition to generate a CCACCA at the 3' terminus of unstable tRNAs. While stable tRNAs receive only 3'-terminal CCA, unstable tRNAs are marked with CCACCA and rapidly degraded. In Bordetella pertussis (strain Tohama I / ATCC BAA-589 / NCTC 13251), this protein is CCA-adding enzyme.